The primary structure comprises 156 residues: Small ribosomal subunit protein uS7 (156 aa).

The protein belongs to the universal ribosomal protein uS7 family. Part of the 30S ribosomal subunit. Contacts proteins S9 and S11.

Functionally, one of the primary rRNA binding proteins, it binds directly to 16S rRNA where it nucleates assembly of the head domain of the 30S subunit. Is located at the subunit interface close to the decoding center, probably blocks exit of the E-site tRNA. In Halalkalibacterium halodurans (strain ATCC BAA-125 / DSM 18197 / FERM 7344 / JCM 9153 / C-125) (Bacillus halodurans), this protein is Small ribosomal subunit protein uS7.